We begin with the raw amino-acid sequence, 82 residues long: Small ribosomal subunit protein bS16 (82 aa).

It belongs to the bacterial ribosomal protein bS16 family.

The protein is Small ribosomal subunit protein bS16 of Francisella tularensis subsp. holarctica (strain FTNF002-00 / FTA).